Consider the following 916-residue polypeptide: Protein translocase subunit SecA (916 aa).

ATP-binding positions include Q87, 105 to 109, and D507; that span reads GEGKT. Residues C900, C902, C911, and H912 each coordinate Zn(2+).

Belongs to the SecA family. In terms of assembly, monomer and homodimer. Part of the essential Sec protein translocation apparatus which comprises SecA, SecYEG and auxiliary proteins SecDF-YajC and YidC. Requires Zn(2+) as cofactor.

The protein resides in the cell inner membrane. It is found in the cytoplasm. It catalyses the reaction ATP + H2O + cellular proteinSide 1 = ADP + phosphate + cellular proteinSide 2.. Functionally, part of the Sec protein translocase complex. Interacts with the SecYEG preprotein conducting channel. Has a central role in coupling the hydrolysis of ATP to the transfer of proteins into and across the cell membrane, serving both as a receptor for the preprotein-SecB complex and as an ATP-driven molecular motor driving the stepwise translocation of polypeptide chains across the membrane. The protein is Protein translocase subunit SecA of Neisseria meningitidis serogroup C / serotype 2a (strain ATCC 700532 / DSM 15464 / FAM18).